The sequence spans 545 residues: Heparanase (545 aa).

An N-terminal signal peptide occupies residues 1–37; that stretch reads MLACRKPGLRPPLLLLLPLLGPLGPCSPGTPAAAAPA. Residue 64 to 66 participates in heparan sulfate group binding; the sequence is DAN. A propeptide spans 112–159 (linker peptide); that stretch reads PAFEERSYWLSQSNQDICKSGSIPSDVEEKLRLEWPFQEQVLLREQYQ. Cysteines 129 and 181 form a disulfide. 160–164 is a heparan sulfate group binding site; that stretch reads KKFTN. N-linked (GlcNAc...) asparagine glycosylation is found at Asn164 and Asn219. Glu227 functions as the Proton donor in the catalytic mechanism. Residues 272–282, His298, and Arg305 contribute to the heparan sulfate group site; that span reads QPRRNTVKMLK. Residues 290-419 are required for heterodimerization with the heparanase 8 kDa subunit; the sequence is EVIDSVTWHH…LLFKKLVGNK (130 aa). Catalysis depends on Glu345, which acts as the Nucleophile. Residues 350–352 and 391–393 each bind heparan sulfate group; these read FGG and GNY. An intrachain disulfide couples Cys439 to Cys544. N-linked (GlcNAc...) asparagine glycosylation occurs at Asn461. Residues 529-545 form a required for transferring proheparanase to the Golgi apparatus, secretion and subsequent enzyme activity and for enhancement of PKB/AKT1 phosphorylation region; sequence FSYGFFVIRNAKVAACI.

Belongs to the glycosyl hydrolase 79 family. As to quaternary structure, heterodimer; heterodimer formation between the 8 kDa and the 50 kDa subunits is required for enzyme activity. Interacts with TF; the interaction, inhibited by heparin, enhances the generation of activated factor X and activates coagulation. Interacts with HRG; the interaction is enhanced at acidic pH, partially inhibits binding of HPSE to cell surface receptors and modulates its enzymatic activity. Interacts with SDC1; the interaction enhances the shedding of SDC1. Interacts with HPSE2. In terms of processing, proteolytically processed. The cleavage of the 65 kDa form leads to the generation of a linker peptide, and the 8 kDa and the 50 kDa products. The active form, the 8/50 kDa heterodimer, is resistant to degradation. Complete removal of the linker peptide appears to be a prerequisite to the complete activation of the enzyme. Post-translationally, N-glycosylated. Glycosylation of the 50 kDa subunit appears to be essential for its solubility. In terms of tissue distribution, highly expressed in placenta and weakly in the kidney, lung, spleen and uterus.

The protein localises to the lysosome membrane. It is found in the secreted. Its subcellular location is the nucleus. It catalyses the reaction endohydrolysis of (1-&gt;4)-beta-D-glycosidic bonds of heparan sulfate chains in heparan sulfate proteoglycan.. Inhibited by laminarin sulfate and, to a lower extent, by heparin, sulfamin and EDTA. Activated by calcium and magnesium. Endoglycosidase that cleaves heparan sulfate proteoglycans (HSPGs) into heparan sulfate side chains and core proteoglycans. Participates in extracellular matrix (ECM) degradation and remodeling. Selectively cleaves the linkage between a glucuronic acid unit and an N-sulfo glucosamine unit carrying either a 3-O-sulfo or a 6-O-sulfo group. Can also cleave the linkage between a glucuronic acid unit and an N-sulfo glucosamine unit carrying a 2-O-sulfo group, but not linkages between a glucuronic acid unit and a 2-O-sulfated iduronic acid moiety. Essentially inactive at neutral pH but becomes active under acidic conditions such as during tumor invasion and in inflammatory processes. Facilitates cell migration associated with metastasis, wound healing and inflammation. Enhances shedding of syndecans. Acts as a procoagulant by enhancing the generation of activated factor X/F10 in the presence of tissue factor/TF and activated factor VII/F7. Independent of its enzymatic activity, increases cell adhesion to the extracellular matrix (ECM). Enhances AKT1/PKB phosphorylation, possibly via interaction with a lipid raft-resident receptor. Plays a role in the regulation of osteogenesis. Enhances angiogenesis through up-regulation of SRC-mediated activation of VEGF. Implicated in hair follicle inner root sheath differentiation and hair homeostasis. The protein is Heparanase (HPSE) of Bos taurus (Bovine).